Reading from the N-terminus, the 307-residue chain is Agmatinase (307 aa).

Mn(2+) contacts are provided by histidine 126, aspartate 149, histidine 151, aspartate 153, aspartate 230, and aspartate 232.

Belongs to the arginase family. Agmatinase subfamily. Mn(2+) is required as a cofactor.

It catalyses the reaction agmatine + H2O = urea + putrescine. The protein operates within amine and polyamine biosynthesis; putrescine biosynthesis via agmatine pathway; putrescine from agmatine: step 1/1. In terms of biological role, catalyzes the formation of putrescine from agmatine. In Sodalis glossinidius (strain morsitans), this protein is Agmatinase.